The chain runs to 335 residues: Glyceraldehyde-3-phosphate dehydrogenase (335 aa).

Residues 13 to 14 (TI) and Gly111 contribute to the NAD(+) site. Position 140–142 (140–142 (SCN)) interacts with D-glyceraldehyde 3-phosphate. The Nucleophile role is filled by Cys141. Residue Arg169 participates in NAD(+) binding. Residues Thr171 and 195–196 (HG) contribute to the D-glyceraldehyde 3-phosphate site. An NAD(+)-binding site is contributed by Gln300.

The protein belongs to the glyceraldehyde-3-phosphate dehydrogenase family. In terms of assembly, homotetramer.

Its subcellular location is the cytoplasm. The enzyme catalyses D-glyceraldehyde 3-phosphate + phosphate + NADP(+) = (2R)-3-phospho-glyceroyl phosphate + NADPH + H(+). The catalysed reaction is D-glyceraldehyde 3-phosphate + phosphate + NAD(+) = (2R)-3-phospho-glyceroyl phosphate + NADH + H(+). The protein operates within carbohydrate degradation; glycolysis; pyruvate from D-glyceraldehyde 3-phosphate: step 1/5. The protein is Glyceraldehyde-3-phosphate dehydrogenase of Methanosarcina mazei (strain ATCC BAA-159 / DSM 3647 / Goe1 / Go1 / JCM 11833 / OCM 88) (Methanosarcina frisia).